A 375-amino-acid chain; its full sequence is Chaperone protein DnaJ (375 aa).

Residues 4–68 (DYYEILGVSR…ETRARYDRFG (65 aa)) enclose the J domain. The segment at 135-217 (GGEKEIRISH…CDGKGANQVT (83 aa)) adopts a CR-type zinc-finger fold. The Zn(2+) site is built by Cys-148, Cys-151, Cys-165, Cys-168, Cys-191, Cys-194, Cys-205, and Cys-208. CXXCXGXG motif repeat units follow at residues 148–155 (CEVCSGSG), 165–172 (CSTCSGSG), 191–198 (CPTCNGTG), and 205–212 (CDACDGKG).

The protein belongs to the DnaJ family. As to quaternary structure, homodimer. It depends on Zn(2+) as a cofactor.

The protein resides in the cytoplasm. Participates actively in the response to hyperosmotic and heat shock by preventing the aggregation of stress-denatured proteins and by disaggregating proteins, also in an autonomous, DnaK-independent fashion. Unfolded proteins bind initially to DnaJ; upon interaction with the DnaJ-bound protein, DnaK hydrolyzes its bound ATP, resulting in the formation of a stable complex. GrpE releases ADP from DnaK; ATP binding to DnaK triggers the release of the substrate protein, thus completing the reaction cycle. Several rounds of ATP-dependent interactions between DnaJ, DnaK and GrpE are required for fully efficient folding. Also involved, together with DnaK and GrpE, in the DNA replication of plasmids through activation of initiation proteins. The sequence is that of Chaperone protein DnaJ from Nostoc punctiforme (strain ATCC 29133 / PCC 73102).